A 272-amino-acid polypeptide reads, in one-letter code: Dermonecrotic toxin SpeSicTox-betaIB1b (272 aa).

Histidine 5 is a catalytic residue. The Mg(2+) site is built by glutamate 25 and aspartate 27. The Nucleophile role is filled by histidine 41. 2 disulfides stabilise this stretch: cysteine 45–cysteine 51 and cysteine 47–cysteine 191. Aspartate 85 is a binding site for Mg(2+).

The protein belongs to the arthropod phospholipase D family. Class II subfamily. Mg(2+) serves as cofactor. Expressed by the venom gland.

Its subcellular location is the secreted. It catalyses the reaction an N-(acyl)-sphingosylphosphocholine = an N-(acyl)-sphingosyl-1,3-cyclic phosphate + choline. The catalysed reaction is an N-(acyl)-sphingosylphosphoethanolamine = an N-(acyl)-sphingosyl-1,3-cyclic phosphate + ethanolamine. It carries out the reaction a 1-acyl-sn-glycero-3-phosphocholine = a 1-acyl-sn-glycero-2,3-cyclic phosphate + choline. The enzyme catalyses a 1-acyl-sn-glycero-3-phosphoethanolamine = a 1-acyl-sn-glycero-2,3-cyclic phosphate + ethanolamine. Its function is as follows. Dermonecrotic toxins cleave the phosphodiester linkage between the phosphate and headgroup of certain phospholipids (sphingolipid and lysolipid substrates), forming an alcohol (often choline) and a cyclic phosphate. This toxin acts on sphingomyelin (SM). It may also act on ceramide phosphoethanolamine (CPE), lysophosphatidylcholine (LPC) and lysophosphatidylethanolamine (LPE), but not on lysophosphatidylserine (LPS), and lysophosphatidylglycerol (LPG). It acts by transphosphatidylation, releasing exclusively cyclic phosphate products as second products. Induces dermonecrosis, hemolysis, increased vascular permeability, edema, inflammatory response, and platelet aggregation. In Sicarius peruensis (Six-eyed sand spider), this protein is Dermonecrotic toxin SpeSicTox-betaIB1b.